The chain runs to 22 residues: thr operon leader peptide (22 aa).

This sequence belongs to the thr operon leader peptide family.

Functionally, this protein is involved in control of the biosynthesis of threonine. The protein is thr operon leader peptide of Yersinia pestis bv. Antiqua (strain Antiqua).